A 792-amino-acid polypeptide reads, in one-letter code: Terminal nucleotidyltransferase 4A (792 aa).

A disordered region spans residues 55 to 191 (GAAGRGSGGL…QFHPGRRKRE (137 aa)). Low complexity-rich tracts occupy residues 80–97 (APAALPPALLTALGPAAE) and 105–139 (SPSLSSSSSSSSSNAESGTESPGCSSSSSSSASLG). Mg(2+)-binding residues include aspartate 297 and aspartate 299. 4 residues coordinate ATP: glycine 360, lysine 385, serine 403, and tyrosine 404. In terms of domain architecture, PAP-associated spans 428–486 (NLGMLLVEFFELYGRNFNYLKTGIRIKEGGAYIAKEEIMKAMTSGYRPSMLCIEDPLLP). ATP is bound by residues asparagine 488 and arginine 492. Positions 601–619 (QLLSSGSSASSVSSLSGSD) are enriched in low complexity. 2 disordered regions span residues 601–632 (QLLSSGSSASSVSSLSGSDVDSDTPPCTTPSV) and 737–792 (MKGS…SLSR). Over residues 744–756 (TQGGGYSSVGSGG) the composition is skewed to gly residues. A compositionally biased stretch (basic residues) spans 764–781 (RGHHQYNRTGWRRKKHTH).

It belongs to the DNA polymerase type-B-like family. Component of a nuclear TRAMP-like complex, an ATP-dependent exosome regulatory complex consisting of a helicase (MTREX), an oligadenylate polymerase (TENT4B or TENT4A), and a substrate specific RNA-binding factor (ZCCHC7 or ZCCHC8). Several TRAMP-like complexes exist with specific compositions and are associated with nuclear, or nucleolar RNA exosomes. Mg(2+) is required as a cofactor. Requires Mn(2+) as cofactor.

It is found in the cytoplasm. The protein localises to the nucleus. Its subcellular location is the nucleoplasm. It carries out the reaction RNA(n) + ATP = RNA(n)-3'-adenine ribonucleotide + diphosphate. Its function is as follows. Terminal nucleotidyltransferase that catalyzes preferentially the transfer of ATP and GTP on RNA 3' poly(A) tail creating a heterogeneous 3' poly(A) tail leading to mRNAs stabilization by protecting mRNAs from active deadenylation. Also functions as a catalytic subunit of a TRAMP-like complex which has a poly(A) RNA polymerase activity and is involved in a post-transcriptional quality control mechanism. Polyadenylation with short oligo(A) tails is required for the degradative activity of the exosome on several of its nuclear RNA substrates. Has no terminal uridylyltransferase activity, and does not play a role in replication-dependent histone mRNA degradation via uridylation. The chain is Terminal nucleotidyltransferase 4A from Homo sapiens (Human).